A 190-amino-acid chain; its full sequence is Large ribosomal subunit protein uL5 (190 aa).

It belongs to the universal ribosomal protein uL5 family. In terms of assembly, part of the 50S ribosomal subunit; part of the 5S rRNA/L5/L18/L25 subcomplex. Contacts the 5S rRNA and the P site tRNA. Forms a bridge to the 30S subunit in the 70S ribosome.

This is one of the proteins that bind and probably mediate the attachment of the 5S RNA into the large ribosomal subunit, where it forms part of the central protuberance. In the 70S ribosome it contacts protein S13 of the 30S subunit (bridge B1b), connecting the 2 subunits; this bridge is implicated in subunit movement. Contacts the P site tRNA; the 5S rRNA and some of its associated proteins might help stabilize positioning of ribosome-bound tRNAs. The chain is Large ribosomal subunit protein uL5 from Blochmanniella floridana.